We begin with the raw amino-acid sequence, 303 residues long: Bidirectional sugar transporter SWEET14 (303 aa).

The Extracellular segment spans residues 1–9; it reads MAGMSLQHP. The helical transmembrane segment at 10–30 threads the bilayer; the sequence is WAFAFGLLGNIISFMTYLAPL. The MtN3/slv 1 domain occupies 13 to 98; sequence AFGLLGNIIS…AVYLVYAPKK (86 aa). Over 31–44 the chain is Cytoplasmic; sequence PTFYRIYKSKSTQG. The chain crosses the membrane as a helical span at residues 45-65; sequence FQSVPYVVALFSAMLWIYYAL. Residues 66-72 are Extracellular-facing; the sequence is LKSDECL. Residues 73 to 93 traverse the membrane as a helical segment; sequence LITINSAGCVIETIYIAVYLV. The Cytoplasmic segment spans residues 94-105; it reads YAPKKAKMFTAK. A helical transmembrane segment spans residues 106–126; the sequence is LLLLVNVGVFGLILLLTLLLS. The Extracellular segment spans residues 127-133; sequence AGDRRIV. Residues 134-154 form a helical membrane-spanning segment; it reads VLGWVCVGFSVSVFVAPLSII. Positions 134–217 constitute a MtN3/slv 2 domain; sequence VLGWVCVGFS…MGLYAMYRNS (84 aa). At 155-167 the chain is on the cytoplasmic side; the sequence is RLVVRTKSVEFMP. The chain crosses the membrane as a helical span at residues 168 to 188; it reads FSLSFSLTISAVVWFLYGLLI. Residues 189–192 lie on the Extracellular side of the membrane; that stretch reads KDKY. The chain crosses the membrane as a helical span at residues 193 to 213; the sequence is VALPNVLGFSFGVIQMGLYAM. Topologically, residues 214–303 are cytoplasmic; sequence YRNSTPKAVL…AGAGEKKVAA (90 aa). Residues 266–290 form a disordered region; it reads HPVDVESPPAEAPPEEDDKAAAATA.

This sequence belongs to the SWEET sugar transporter family. Forms homooligomers and/or heterooligomers.

It localises to the cell membrane. In terms of biological role, mediates both low-affinity uptake and efflux of sugar across the plasma membrane. Functionally, confers blight susceptibility. Confers TAL effector-mediated susceptibility to Xanthomonas oryzae pv. oryzae. The protein is Bidirectional sugar transporter SWEET14 (SWEET14) of Oryza sativa subsp. japonica (Rice).